The primary structure comprises 74 residues: Translation initiation factor IF-1 (74 aa).

In terms of domain architecture, S1-like spans 1 to 72 (MAKETEMEFE…TRGRITYRKI (72 aa)).

Belongs to the IF-1 family. Component of the 30S ribosomal translation pre-initiation complex which assembles on the 30S ribosome in the order IF-2 and IF-3, IF-1 and N-formylmethionyl-tRNA(fMet); mRNA recruitment can occur at any time during PIC assembly.

The protein localises to the cytoplasm. Functionally, one of the essential components for the initiation of protein synthesis. Stabilizes the binding of IF-2 and IF-3 on the 30S subunit to which N-formylmethionyl-tRNA(fMet) subsequently binds. Helps modulate mRNA selection, yielding the 30S pre-initiation complex (PIC). Upon addition of the 50S ribosomal subunit IF-1, IF-2 and IF-3 are released leaving the mature 70S translation initiation complex. The chain is Translation initiation factor IF-1 from Mycoplasma capricolum subsp. capricolum (strain California kid / ATCC 27343 / NCTC 10154).